A 704-amino-acid polypeptide reads, in one-letter code: Glycine--tRNA ligase beta subunit (704 aa).

This sequence belongs to the class-II aminoacyl-tRNA synthetase family. In terms of assembly, tetramer of two alpha and two beta subunits.

It localises to the cytoplasm. It catalyses the reaction tRNA(Gly) + glycine + ATP = glycyl-tRNA(Gly) + AMP + diphosphate. This is Glycine--tRNA ligase beta subunit from Rhizobium johnstonii (strain DSM 114642 / LMG 32736 / 3841) (Rhizobium leguminosarum bv. viciae).